The sequence spans 194 residues: Probable GTP-binding protein EngB (194 aa).

Positions 22–194 constitute an EngB-type G domain; sequence GKPEIALVGR…EVWHWIEQHI (173 aa). GTP is bound by residues 30-37, 57-61, 75-78, 142-145, and 175-177; these read GRSNVGKS, GKTQT, DVPG, TKSD, and FSS. Mg(2+)-binding residues include S37 and T59.

The protein belongs to the TRAFAC class TrmE-Era-EngA-EngB-Septin-like GTPase superfamily. EngB GTPase family. Mg(2+) is required as a cofactor.

Necessary for normal cell division and for the maintenance of normal septation. This Leuconostoc mesenteroides subsp. mesenteroides (strain ATCC 8293 / DSM 20343 / BCRC 11652 / CCM 1803 / JCM 6124 / NCDO 523 / NBRC 100496 / NCIMB 8023 / NCTC 12954 / NRRL B-1118 / 37Y) protein is Probable GTP-binding protein EngB.